Consider the following 603-residue polypeptide: MLSLAHALESQLRAAIDRAFPEAAASARESGTGLDPQLAPASKPEFGDFQANAALPLAKPLKQPPRQIAAAIVDQLMVDTAFNAICLTPDIAGPGFINLTVRPECLAAEVQARLADARLGVPLVEGDNDGQQPTPVVVDFSSPNIAKEMHVGHLRSTIIGDSLARVLEFRGHPVLRLNHVGDWGTQFGMLITHLKQVAPEALETADAVDLGDLVVFYRQAKQRFDDDEAFQTTSREEVVKLQGGDPLSLKAWSLLCDQSRREFQKIYDRLDVRLNERGESFYNAYLESVVEDLNVSGLLVSDDGAQCVFLEGVTGKDGKPLPVIVQKSDGGFNYATTDLAAMRYRFAAPPQGDGARRVIYVTDAGQANHFAGVFQVAQRAGWIPDAGRLQHVPFGLVQGEDGKKLKTRAGDTVRLRELLDEAVERAESDLRRRLQEEGRDEDESFIEQVATTVGLAAVKYADLSQNRITNYQFSFDRMLALQGNTAPYLLYAVVRIAGIARKGGDLDVTTAELQFSETQEWALVRELLKFDAVIAEVEEELLPNRLCTYLFELSQVFNRFYDQVPVLKAEQPSRSCRLALCRLTADTLKLGLSLLGIPTLERM.

The short motif at 143–153 (PNIAKEMHVGH) is the 'HIGH' region element.

The protein belongs to the class-I aminoacyl-tRNA synthetase family. Monomer.

It localises to the cytoplasm. The catalysed reaction is tRNA(Arg) + L-arginine + ATP = L-arginyl-tRNA(Arg) + AMP + diphosphate. This Prochlorococcus marinus (strain MIT 9303) protein is Arginine--tRNA ligase.